A 3066-amino-acid polypeptide reads, in one-letter code: Serine-protein kinase ATM (3066 aa).

The residue at position 2 (S2) is an N-acetylserine. S367 is modified (phosphoserine; by autocatalysis). The tract at residues 829–862 is disordered; sequence LDHGVHPGEDDEDGGGCDSLMEAEGPSSTGLSTA. Residues 1380–1389 are interaction with ABL1; that stretch reads DPAPNPPYFP. Residue S1899 is modified to Phosphoserine; by autocatalysis. In terms of domain architecture, FAT spans 1946 to 2576; sequence EVAKVAQSCS…LFIILALANA (631 aa). Positions 1973-1982 are enriched in basic and acidic residues; sequence TDEQEKRSPT. Disordered regions lie at residues 1973 to 2000 and 2585 to 2607; these read TDEQEKRSPTFEEGSQGTTISSLSEKSK and PETTRRSRITKSTSKENSHLDED. Residues 1985–1996 show a composition bias toward polar residues; that stretch reads EGSQGTTISSLS. S1987 carries the post-translational modification Phosphoserine; by autocatalysis. Residues 2597-2607 are compositionally biased toward basic and acidic residues; sequence TSKENSHLDED. In terms of domain architecture, PI3K/PI4K catalytic spans 2696–3009; that stretch reads FKTEFRLAGG…ECKQSLSDTD (314 aa). Residues 2702-2708 form a G-loop region; it reads LAGGLNL. The interval 2877–2885 is catalytic loop; that stretch reads GLGDRHVQN. Positions 2897–2921 are activation loop; the sequence is HIDLGVAFEQGKILPTPETVPFRLS. Positions 2986-3007 are disordered; sequence DESDLHSTPNADDQECKQSLSD. The segment covering 2991-3007 has biased composition (polar residues); the sequence is HSTPNADDQECKQSLSD. A Phosphoserine modification is found at S3006. Residue K3026 is modified to N6-acetyllysine. In terms of domain architecture, FATC spans 3034–3066; sequence TVLSVGGQVNLLIQQAMDPKNLSRLFPGWKAWV. Positions 3056-3058 match the Microbody targeting signal; atypical motif; sequence SRL.

This sequence belongs to the PI3/PI4-kinase family. ATM subfamily. As to quaternary structure, homodimer. Dimers or tetramers in inactive state. On DNA damage, autophosphorylation dissociates ATM into monomers rendering them catalytically active. Binds p53/TP53, ABL1, BRCA1 and TERF1. Interacts with NBN (via FxF/Y motif). Part of the BRCA1-associated genome surveillance complex (BASC), which contains BRCA1, MSH2, MSH6, MLH1, ATM, BLM, PMS2 and the RAD50-MRE11-NBN protein complex. This association could be a dynamic process changing throughout the cell cycle and within subnuclear domains. Interacts with RAD17; DNA damage promotes the association. Interacts with EEF1E1; the interaction, induced on DNA damage, up-regulates TP53. Interacts with KAT8, NABP2, ATMIN and CEP164. Interacts with AP2B1 and AP3B2; the interaction occurs in cytoplasmic vesicles. Interacts with TELO2 and TTI1. Interacts with DDX1. Interacts with BRAT1. Interacts with CYREN (via XLF motif). Interacts (via microbody targeting signal) with PEX5; promoting translocation to peroxisomes in response to reactive oxygen species (ROS). Phosphorylated by NUAK1/ARK5. Autophosphorylation on Ser-367, Ser-1899, Ser-1987 correlates with DNA damage-mediated activation of the kinase. In terms of processing, phosphorylated by NUAK1/ARK5. Autophosphorylation on Ser-367, Ser-1899, Ser-1987 correlates with DNA damage-mediated activation of the kinase. During the late stages of DNA damage response, dephosphorylated following deacetylation by SIRT7, leading to ATM deactivation. Post-translationally, acetylation, on DNA damage, is required for activation of the kinase activity, dimer-monomer transition, and subsequent autophosphorylation on Ser-1987. Acetylated in vitro by KAT5/TIP60. Deacetylated by SIRT7 during the late stages of DNA damage response, promoting ATM dephosphorylation and subsequent deactivation. Expressed in brain, skeletal muscle, testis, followed by spleen, lung, kidney, heart, liver and thymus. Ubiquitously expressed in embryonal tissues.

Its subcellular location is the nucleus. It is found in the cytoplasmic vesicle. The protein localises to the cytoplasm. The protein resides in the cytoskeleton. It localises to the microtubule organizing center. Its subcellular location is the centrosome. It is found in the peroxisome matrix. It carries out the reaction L-seryl-[protein] + ATP = O-phospho-L-seryl-[protein] + ADP + H(+). The enzyme catalyses L-threonyl-[protein] + ATP = O-phospho-L-threonyl-[protein] + ADP + H(+). Its activity is regulated as follows. Activated by the MRN (MRE11-RAD50-NBS1) complex in response to DNA double strand breaks (DSBs), which recruits ATM to DSBs and promotes its activation. Inhibited by wortmannin. In terms of biological role, serine/threonine protein kinase which activates checkpoint signaling upon double strand breaks (DSBs), apoptosis and genotoxic stresses such as ionizing ultraviolet A light (UVA), thereby acting as a DNA damage sensor. Recognizes the substrate consensus sequence [ST]-Q. Phosphorylates 'Ser-139' of histone variant H2AX at double strand breaks (DSBs), thereby regulating DNA damage response mechanism. Also plays a role in pre-B cell allelic exclusion, a process leading to expression of a single immunoglobulin heavy chain allele to enforce clonality and monospecific recognition by the B-cell antigen receptor (BCR) expressed on individual B-lymphocytes. After the introduction of DNA breaks by the RAG complex on one immunoglobulin allele, acts by mediating a repositioning of the second allele to pericentromeric heterochromatin, preventing accessibility to the RAG complex and recombination of the second allele. Also involved in signal transduction and cell cycle control. May function as a tumor suppressor. Necessary for activation of ABL1 and SAPK. Phosphorylates DYRK2, CHEK2, p53/TP53, FBXW7, FANCD2, NFKBIA, BRCA1, CREBBP/CBP, RBBP8/CTIP, FBXO46, MRE11, nibrin (NBN), RAD50, RAD17, PELI1, TERF1, UFL1, RAD9, UBQLN4 and DCLRE1C. May play a role in vesicle and/or protein transport. Could play a role in T-cell development, gonad and neurological function. Binds DNA ends. Plays a role in replication-dependent histone mRNA degradation. Phosphorylation of DYRK2 in nucleus in response to genotoxic stress prevents its MDM2-mediated ubiquitination and subsequent proteasome degradation. Phosphorylates ATF2 which stimulates its function in DNA damage response. Phosphorylates ERCC6 which is essential for its chromatin remodeling activity at DNA double-strand breaks. Phosphorylates TTC5/STRAP at 'Ser-203' in the cytoplasm in response to DNA damage, which promotes TTC5/STRAP nuclear localization. Also involved in pexophagy by mediating phosphorylation of PEX5: translocated to peroxisomes in response to reactive oxygen species (ROS), and catalyzes phosphorylation of PEX5, promoting PEX5 ubiquitination and induction of pexophagy. This chain is Serine-protein kinase ATM (Atm), found in Mus musculus (Mouse).